A 176-amino-acid chain; its full sequence is RNA pyrophosphohydrolase (176 aa).

The 144-residue stretch at 6 to 149 (GYRPNVGIVI…KRDVYRRVMK (144 aa)) folds into the Nudix hydrolase domain. The short motif at 38–59 (GGINPGESPEQAMYRELFEEVG) is the Nudix box element.

It belongs to the Nudix hydrolase family. RppH subfamily. It depends on a divalent metal cation as a cofactor.

Its function is as follows. Accelerates the degradation of transcripts by removing pyrophosphate from the 5'-end of triphosphorylated RNA, leading to a more labile monophosphorylated state that can stimulate subsequent ribonuclease cleavage. The chain is RNA pyrophosphohydrolase from Proteus mirabilis (strain HI4320).